A 345-amino-acid chain; its full sequence is Phosphoribosylformylglycinamidine cyclo-ligase (345 aa).

This sequence belongs to the AIR synthase family.

Its subcellular location is the cytoplasm. It catalyses the reaction 2-formamido-N(1)-(5-O-phospho-beta-D-ribosyl)acetamidine + ATP = 5-amino-1-(5-phospho-beta-D-ribosyl)imidazole + ADP + phosphate + H(+). The protein operates within purine metabolism; IMP biosynthesis via de novo pathway; 5-amino-1-(5-phospho-D-ribosyl)imidazole from N(2)-formyl-N(1)-(5-phospho-D-ribosyl)glycinamide: step 2/2. This Histophilus somni (strain 129Pt) (Haemophilus somnus) protein is Phosphoribosylformylglycinamidine cyclo-ligase.